The chain runs to 218 residues: Hypoxanthine-guanine phosphoribosyltransferase (218 aa).

K69 is a binding site for GMP. K103 carries the post-translational modification N6-acetyllysine. K115 is covalently cross-linked (Glycyl lysine isopeptide (Lys-Gly) (interchain with G-Cter in SUMO1); alternate). K115 is covalently cross-linked (Glycyl lysine isopeptide (Lys-Gly) (interchain with G-Cter in SUMO2); alternate). GMP-binding positions include 134–142 (EDIIDTGKT), K166, 186–188 (KFV), and D194. D138 (proton acceptor) is an active-site residue. The residue at position 142 (T142) is a Phosphothreonine. D194 contributes to the Mg(2+) binding site.

The protein belongs to the purine/pyrimidine phosphoribosyltransferase family. As to quaternary structure, homotetramer. Requires Mg(2+) as cofactor.

It localises to the cytoplasm. It carries out the reaction IMP + diphosphate = hypoxanthine + 5-phospho-alpha-D-ribose 1-diphosphate. The enzyme catalyses GMP + diphosphate = guanine + 5-phospho-alpha-D-ribose 1-diphosphate. It functions in the pathway purine metabolism; IMP biosynthesis via salvage pathway; IMP from hypoxanthine: step 1/1. Functionally, converts guanine to guanosine monophosphate, and hypoxanthine to inosine monophosphate. Transfers the 5-phosphoribosyl group from 5-phosphoribosylpyrophosphate onto the purine. Plays a central role in the generation of purine nucleotides through the purine salvage pathway. In Rattus norvegicus (Rat), this protein is Hypoxanthine-guanine phosphoribosyltransferase (Hprt1).